The primary structure comprises 360 residues: Pyrimidine monooxygenase RutA (360 aa).

FMN is bound by residues 49-50 (IK), asparagine 115, glutamate 124, 140-141 (RY), and serine 190.

The protein belongs to the NtaA/SnaA/DszA monooxygenase family. RutA subfamily.

It catalyses the reaction uracil + FMNH2 + NADH + O2 = (Z)-3-ureidoacrylate + FMN + NAD(+) + H2O + H(+). It carries out the reaction thymine + FMNH2 + NADH + O2 = (Z)-2-methylureidoacrylate + FMN + NAD(+) + H2O + H(+). Catalyzes the pyrimidine ring opening between N-3 and C-4 by an unusual flavin hydroperoxide-catalyzed mechanism, adding oxygen atoms in the process to yield ureidoacrylate peracid, that immediately reacts with FMN forming ureidoacrylate and FMN-N(5)-oxide. The FMN-N(5)-oxide reacts spontaneously with NADH to produce FMN. Requires the flavin reductase RutF to regenerate FMN in vivo. This is Pyrimidine monooxygenase RutA from Stutzerimonas stutzeri (strain A1501) (Pseudomonas stutzeri).